A 555-amino-acid polypeptide reads, in one-letter code: CTP synthase (555 aa).

The segment at 1–277 (MPKEPETEYD…DQHVMERLNV (277 aa)) is amidoligase domain. S26 serves as a coordination point for CTP. S26 serves as a coordination point for UTP. 27-32 (GLGKGI) serves as a coordination point for ATP. Y67 serves as a coordination point for L-glutamine. D84 contributes to the ATP binding site. Residues D84 and E152 each coordinate Mg(2+). CTP is bound by residues 159–161 (DIE), 198–203 (KTKPTQ), and K234. Residues 198-203 (KTKPTQ) and K234 contribute to the UTP site. The 236-residue stretch at 307-542 (LVGKYDLEDA…LKSVDSTLDA (236 aa)) folds into the Glutamine amidotransferase type-1 domain. G364 provides a ligand contact to L-glutamine. C391 acts as the Nucleophile; for glutamine hydrolysis in catalysis. L-glutamine-binding positions include 392–395 (LGFQ), E415, and R472. Residues H515 and E517 contribute to the active site.

Belongs to the CTP synthase family. Homotetramer.

It catalyses the reaction UTP + L-glutamine + ATP + H2O = CTP + L-glutamate + ADP + phosphate + 2 H(+). The catalysed reaction is L-glutamine + H2O = L-glutamate + NH4(+). It carries out the reaction UTP + NH4(+) + ATP = CTP + ADP + phosphate + 2 H(+). It functions in the pathway pyrimidine metabolism; CTP biosynthesis via de novo pathway; CTP from UDP: step 2/2. Allosterically activated by GTP, when glutamine is the substrate; GTP has no effect on the reaction when ammonia is the substrate. The allosteric effector GTP functions by stabilizing the protein conformation that binds the tetrahedral intermediate(s) formed during glutamine hydrolysis. Inhibited by the product CTP, via allosteric rather than competitive inhibition. Its function is as follows. Catalyzes the ATP-dependent amination of UTP to CTP with either L-glutamine or ammonia as the source of nitrogen. Regulates intracellular CTP levels through interactions with the four ribonucleotide triphosphates. The chain is CTP synthase from Haloquadratum walsbyi (strain DSM 16790 / HBSQ001).